A 375-amino-acid chain; its full sequence is MFISEIQLKNYRNYEKLELSFEDKVNVIIGENAQGKTNLMEAIYVLAMAKSHRTSNDRELIRWDEDFGQIKGKLQKRNSSLSLELNISKKGKKAKLNQLEQQKLSQYIGVMNVVMFAPEDLNLVKGSPQVRRRFLDMELGQIAPVYLYELSQYQKVLTQRNHLLKKMQGNSKNEETMLDVFTLQLIEHGAKILQKRFEFLHLLQEWAAPIHRGISRGLEELEIVYKPSVDVSESMDLSKIKEVYYESFQSVKQREIFRGTTLLGPHRDDLQFFVNSKNVQVFGSQGQQRTTALSLKLAEIELIYSEVKEYPILLLDDVLSELDDYRQSHLLNTIQGKVQTFVTTTSVDGIEHETLKEAKTIHVTNGTVDCEIDRE.

30–37 is an ATP binding site; that stretch reads GENAQGKT.

Belongs to the RecF family.

The protein resides in the cytoplasm. In terms of biological role, the RecF protein is involved in DNA metabolism; it is required for DNA replication and normal SOS inducibility. RecF binds preferentially to single-stranded, linear DNA. It also seems to bind ATP. This Bacillus cereus (strain ZK / E33L) protein is DNA replication and repair protein RecF.